The primary structure comprises 164 residues: Kunitz-type proteinase inhibitor BbCI (164 aa).

The protein belongs to the protease inhibitor I3 (leguminous Kunitz-type inhibitor) family.

It is found in the secreted. Functionally, inhibits T.cruzi cruzipain. In Bauhinia bauhinioides (Perlebia bauhinoides), this protein is Kunitz-type proteinase inhibitor BbCI.